Reading from the N-terminus, the 403-residue chain is Na(+)-translocating NADH-quinone reductase subunit B (403 aa).

Helical transmembrane passes span 56–76, 121–141, 164–184, 225–245, 260–280, 287–307, 312–332, 348–368, and 371–391; these read MMII…YNVG, AYFL…EVLF, LPPS…VVLG, GFAG…NILG, GSMG…LLLT, IVAG…AIGS, MFAM…GMIF, WLFG…NPAF, and GMML…HFVV. An FMN phosphoryl threonine modification is found at Thr-230.

This sequence belongs to the NqrB/RnfD family. As to quaternary structure, composed of six subunits; NqrA, NqrB, NqrC, NqrD, NqrE and NqrF. The cofactor is FMN.

The protein resides in the cell inner membrane. It carries out the reaction a ubiquinone + n Na(+)(in) + NADH + H(+) = a ubiquinol + n Na(+)(out) + NAD(+). NQR complex catalyzes the reduction of ubiquinone-1 to ubiquinol by two successive reactions, coupled with the transport of Na(+) ions from the cytoplasm to the periplasm. NqrA to NqrE are probably involved in the second step, the conversion of ubisemiquinone to ubiquinol. The sequence is that of Na(+)-translocating NADH-quinone reductase subunit B from Pseudomonas paraeruginosa (strain DSM 24068 / PA7) (Pseudomonas aeruginosa (strain PA7)).